A 285-amino-acid polypeptide reads, in one-letter code: Methyltransferase grgD (285 aa).

It belongs to the methyltransferase superfamily. LaeA methyltransferase family.

Its pathway is secondary metabolite biosynthesis. Its function is as follows. Methyltransferase; part of the gene cluster that mediates the biosynthesis of gregatin A, a fungal polyketide featuring an alkylated furanone core. The PKS grgA synthesizes C11 and C4 polyketide chains in the presence and absence of the trans-enoyl reductase grgB, respectively. The polyketide transferase grgF is then responsible for the fusion of the two carbon chains to produce the furanone skeleton of gregatin A. Next, the cytochrome P450 monooxygenase grgG accepts performs the oxidative cyclization to furnish the gregatin scaffold and leads to the formation of desmethylgregatin A. Finally, the O-methyltransferase grgD methylates the carboxyl group of desmethylgregatin A to provide gregatin A. The polypeptide is Methyltransferase grgD (Penicillium sp).